The chain runs to 273 residues: Tryptophan synthase alpha chain (273 aa).

Residues E56 and D67 each act as proton acceptor in the active site.

It belongs to the TrpA family. As to quaternary structure, tetramer of two alpha and two beta chains.

The catalysed reaction is (1S,2R)-1-C-(indol-3-yl)glycerol 3-phosphate + L-serine = D-glyceraldehyde 3-phosphate + L-tryptophan + H2O. Its pathway is amino-acid biosynthesis; L-tryptophan biosynthesis; L-tryptophan from chorismate: step 5/5. The alpha subunit is responsible for the aldol cleavage of indoleglycerol phosphate to indole and glyceraldehyde 3-phosphate. The sequence is that of Tryptophan synthase alpha chain from Shewanella baltica (strain OS155 / ATCC BAA-1091).